Reading from the N-terminus, the 144-residue chain is Large ribosomal subunit protein uL15 (144 aa).

The segment at 1–51 (MQLNTLSPAQGEKKSRKRVGRGIGSGIGKTCGSGHKGQKSRSGGFNKIGFE) is disordered. The span at 21 to 35 (RGIGSGIGKTCGSGH) shows a compositional bias: gly residues.

This sequence belongs to the universal ribosomal protein uL15 family. Part of the 50S ribosomal subunit.

In terms of biological role, binds to the 23S rRNA. This Vesicomyosocius okutanii subsp. Calyptogena okutanii (strain HA) protein is Large ribosomal subunit protein uL15.